The chain runs to 603 residues: F-box only protein 46 (603 aa).

The tract at residues 20 to 63 (YSQNQPRPPSAALKPSACPEPGGGAEPDHGPAHSENTPPALATE) is disordered. Phosphoserine; by ATM occurs at positions 21 and 67. 4 disordered regions span residues 111–163 (GGSR…PASA), 235–301 (EAQR…ARAK), 326–360 (LLARADEASEGDSPAPARPEDTPPAPPPPPARDCG), and 396–440 (TVSP…AEGT). Residues 152 to 163 (GPPAAEEGPASA) are compositionally biased toward low complexity. Residue Ser-338 is modified to Phosphoserine. Phosphothreonine is present on Thr-347. Composition is skewed to pro residues over residues 347-356 (TPPAPPPPPA) and 417-426 (DGPPEPPPAD). One can recognise an F-box domain in the interval 470 to 522 (RQYMLLLPEHVLVKIFSFLPTRALAALKCTCHHFKGIIEAFGVRATDSRWSRD).

As to quaternary structure, part of a SCF (SKP1-cullin-F-box) protein ligase complex SCF(FBXO46) composed of CUL1, SKP1, RBX1 and FBXO46. Phosphorylated by ATM in response to DNA damage, promoting ubiquitination and degradation by the SCF(FBXO31) complex. Post-translationally, ATM-phosphorylated FBXO46 is ubiquitinated and degradaded by the SCF(FBXO31) complex in response to DNA damage.

Its pathway is protein modification; protein ubiquitination. Functionally, substrate-recognition component of the SCF(FBXO46) protein ligase complex, which mediates the ubiquitination and degradation of target proteins. In absence of stress, the SCF(FBXO46) complex catalyzes ubiquitination and degradation of MTOR-phosphorylated FBXO31. The polypeptide is F-box only protein 46 (Homo sapiens (Human)).